The primary structure comprises 1108 residues: Multidrug resistance regulator 1 (1108 aa).

The span at 1–19 (MSIATTPIETPKSPKSTEP) shows a compositional bias: polar residues. Residues 1-27 (MSIATTPIETPKSPKSTEPQVRKRKKV) are disordered. Positions 31–59 (CTNCRKRKIRCDRQHPCNNCIKSKKHNAC) form a DNA-binding region, zn(2)-C6 fungal-type. A compositionally biased stretch (polar residues) spans 68–83 (PANFSTNGSSHGNTVP). Disordered stretches follow at residues 68–138 (PANF…SENE), 968–990 (DQTYSTSSESSSTPNKDSPLDSR), and 1021–1064 (AQQQ…YYGN). 2 stretches are compositionally biased toward basic and acidic residues: residues 86–104 (RPYEESARIPIRFDAEAPR) and 114–123 (NERKNSKKSP). Residues 124-138 (DNTVANNQQTASENE) are compositionally biased toward polar residues. Positions 134 to 165 (ASENEVTITLSELNMLKQRLQNIEANINAQSN) form a coiled coil. Low complexity-rich tracts occupy residues 970-980 (TYSTSSESSST) and 1023-1041 (QQRQQESQPFTSSQSQSQS).

The protein localises to the nucleus. Functionally, transcription factor that acts as the central regulator of the MDR1 efflux pump. Other target genes include those encoding oxidoreductases, whose up-regulation in fluconazole-resistant isolates may help to prevent cell damage resulting from the generation of toxic molecules in the presence of fluconazole and thereby contribute to drug resistance. This chain is Multidrug resistance regulator 1, found in Candida albicans (strain SC5314 / ATCC MYA-2876) (Yeast).